The sequence spans 732 residues: Polyribonucleotide nucleotidyltransferase (732 aa).

Mg(2+)-binding residues include aspartate 503 and aspartate 509. One can recognise a KH domain in the interval proline 570 to isoleucine 629. The 75-residue stretch at glycine 639–lysine 713 folds into the S1 motif domain. The segment at leucine 710–asparagine 732 is disordered. A compositionally biased stretch (basic and acidic residues) spans valine 715 to asparagine 732.

Belongs to the polyribonucleotide nucleotidyltransferase family. It depends on Mg(2+) as a cofactor.

The protein localises to the cytoplasm. It catalyses the reaction RNA(n+1) + phosphate = RNA(n) + a ribonucleoside 5'-diphosphate. Functionally, involved in mRNA degradation. Catalyzes the phosphorolysis of single-stranded polyribonucleotides processively in the 3'- to 5'-direction. The sequence is that of Polyribonucleotide nucleotidyltransferase from Chlorobium phaeobacteroides (strain DSM 266 / SMG 266 / 2430).